The sequence spans 197 residues: Probable low-affinity putrescine importer PlaP (197 aa).

The next 5 membrane-spanning stretches (helical) occupy residues 33 to 53 (GVLI…HAGV), 85 to 105 (VLLV…TATA), 107 to 127 (INLG…SQFW), 140 to 160 (FNYL…WINL), and 163 to 183 (SSMV…ACVT).

It belongs to the amino acid-polyamine-organocation (APC) superfamily.

Its subcellular location is the cell inner membrane. The catalysed reaction is putrescine(in) + H(+)(in) = putrescine(out) + H(+)(out). Putrescine importer. The chain is Probable low-affinity putrescine importer PlaP (plaP) from Klebsiella pneumoniae.